The chain runs to 229 residues: Aminopyrimidine aminohydrolase (229 aa).

Aspartate 44 serves as a coordination point for substrate. The active-site Nucleophile is the cysteine 137. Substrate-binding residues include tyrosine 141 and tyrosine 167. The active-site Proton donor is the glutamate 208.

This sequence belongs to the TenA family. As to quaternary structure, homotetramer.

The catalysed reaction is 4-amino-5-aminomethyl-2-methylpyrimidine + H2O = 4-amino-5-hydroxymethyl-2-methylpyrimidine + NH4(+). The enzyme catalyses thiamine + H2O = 5-(2-hydroxyethyl)-4-methylthiazole + 4-amino-5-hydroxymethyl-2-methylpyrimidine + H(+). It functions in the pathway cofactor biosynthesis; thiamine diphosphate biosynthesis. In terms of biological role, catalyzes an amino-pyrimidine hydrolysis reaction at the C5' of the pyrimidine moiety of thiamine compounds, a reaction that is part of a thiamine salvage pathway. Thus, catalyzes the conversion of 4-amino-5-aminomethyl-2-methylpyrimidine to 4-amino-5-hydroxymethyl-2-methylpyrimidine (HMP). Is also able to catalyze the hydrolytic cleavage of thiamine; however, this thiaminase activity may not be physiologically relevant. Therefore, is probably involved in the regeneration of the thiamine pyrimidine from thiamine degraded products present in the environment, rather than in thiamine degradation. The protein is Aminopyrimidine aminohydrolase of Staphylococcus aureus (strain MRSA252).